Here is a 262-residue protein sequence, read N- to C-terminus: Phosphatidylglycerol--prolipoprotein diacylglyceryl transferase (262 aa).

4 helical membrane passes run 9-29, 41-61, 80-100, and 109-129; these read LGPL…ILAV, IIPD…ILGA, IFAI…GALV, and LINT…AQSL. Arginine 131 lines the a 1,2-diacyl-sn-glycero-3-phospho-(1'-sn-glycerol) pocket. Transmembrane regions (helical) follow at residues 167–187, 197–217, and 226–246; these read QPTF…ILIF, GHIT…IEGM, and GLRV…MIVI.

Belongs to the Lgt family.

It localises to the cell membrane. The enzyme catalyses L-cysteinyl-[prolipoprotein] + a 1,2-diacyl-sn-glycero-3-phospho-(1'-sn-glycerol) = an S-1,2-diacyl-sn-glyceryl-L-cysteinyl-[prolipoprotein] + sn-glycerol 1-phosphate + H(+). It participates in protein modification; lipoprotein biosynthesis (diacylglyceryl transfer). Its function is as follows. Catalyzes the transfer of the diacylglyceryl group from phosphatidylglycerol to the sulfhydryl group of the N-terminal cysteine of a prolipoprotein, the first step in the formation of mature lipoproteins. The polypeptide is Phosphatidylglycerol--prolipoprotein diacylglyceryl transferase (Streptococcus pneumoniae (strain Taiwan19F-14)).